The chain runs to 269 residues: 1-(5-phosphoribosyl)-5-[(5-phosphoribosylamino)methylideneamino] imidazole-4-carboxamide isomerase (269 aa).

The active-site Proton acceptor is Asp10. The active-site Proton donor is the Asp132.

Belongs to the HisA/HisF family.

Its subcellular location is the cytoplasm. The catalysed reaction is 1-(5-phospho-beta-D-ribosyl)-5-[(5-phospho-beta-D-ribosylamino)methylideneamino]imidazole-4-carboxamide = 5-[(5-phospho-1-deoxy-D-ribulos-1-ylimino)methylamino]-1-(5-phospho-beta-D-ribosyl)imidazole-4-carboxamide. It participates in amino-acid biosynthesis; L-histidine biosynthesis; L-histidine from 5-phospho-alpha-D-ribose 1-diphosphate: step 4/9. This is 1-(5-phosphoribosyl)-5-[(5-phosphoribosylamino)methylideneamino] imidazole-4-carboxamide isomerase from Xylella fastidiosa (strain M12).